Reading from the N-terminus, the 29-residue chain is Glucagon (29 aa).

Ser-2 bears the Phosphoserine mark.

The protein belongs to the glucagon family.

The protein localises to the secreted. Glucagon plays a key role in glucose metabolism and homeostasis. Regulates blood glucose by increasing gluconeogenesis and decreasing glycolysis. The protein is Glucagon (GCG) of Chinchilla chinchilla (Short-tailed chinchilla).